The sequence spans 369 residues: MGDWSFLGEFLEEVHKHSTVVGKVWLTVLFIFRMLVLGTAAGPLWGDEQSDFMCDTQQPGCENVCYDKAFPISHVRFWVLQIIFVSTPSLVYMGHAMHTVRMEEKRKMKEAEREAQEMKNSGDTYYQQKCPVAEKTELSCWDESGGKIILRGSLLNTYVYSILIRTAMEIAFIVGQYILYGIFLETLYICQRAPCPHPVNCYVSRPTEKNVFIIFMLAVAVLSLFLSLAELYHLGWKKAKERCSRAYKPSPSTAPRRLESAPQVERAQMYTPPPDFNQCLASPNGKFISPFSNKMASQQNTANFATERVHSQEDAAGEGPFMKSSYMESPEVASECAAPALPESYFNEKRRFSKASRASSKARSDDLSV.

The Cytoplasmic portion of the chain corresponds to Gly2–Thr19. Residues Val20–Ala40 traverse the membrane as a helical segment. Topologically, residues Ala41–Arg76 are extracellular. Residues Phe77–Met97 traverse the membrane as a helical segment. Topologically, residues His98 to Glu169 are cytoplasmic. Residues Ile170–Cys190 traverse the membrane as a helical segment. The Extracellular portion of the chain corresponds to Gln191–Asn210. The helical transmembrane segment at Val211–Leu231 threads the bilayer. Residues Tyr232–Val369 are Cytoplasmic-facing. The segment at Asn347–Val369 is disordered.

It belongs to the connexin family. Alpha-type (group II) subfamily. As to quaternary structure, a connexon is composed of a hexamer of connexins. As to expression, mostly in heart, and in the whole embryo, liver, stomach, and pectoral muscle.

Its subcellular location is the cell membrane. It localises to the cell junction. The protein resides in the gap junction. Its function is as follows. One gap junction consists of a cluster of closely packed pairs of transmembrane channels, the connexons, through which materials of low MW diffuse from one cell to a neighboring cell. This is Gap junction alpha-5 protein (GJA5) from Gallus gallus (Chicken).